We begin with the raw amino-acid sequence, 377 residues long: MAKKDYYQILGIPKSAEEREIKKAYKKLAMKYHPDRNQGDKTAEGKFKEIKEAYEILINEEKRSAYDQYGHAAFENGQSNSTYSTFTNSADFSDIFGDVFGDIFGGNRTQRAKKGADLCYNMEITLEEAVKGIKKEIQIPTLQKCKTCYGSGTRTGTKPRSCSTCHGKGQIHIRKGFFTVQQSCPTCHGKGTIITDPCNLCHGQGRVETYKILSVKIPPGLDTNDRIRLNNEGEAGANGAQSGDLYVQITVKKHPIFEREGNNLYCEVPINFTMAALGGEIEVPTLDGRVKLKIPYETQSGKLFRIRGRGVKSVQNRNQGDLLCRVVVETPVNLNEQQKNLLHELGNSFHGFRGEKNSPRSKRFFDGVKRFFDDLTR.

The region spanning 5 to 70 (DYYQILGIPK…EKRSAYDQYG (66 aa)) is the J domain. The segment at 132 to 210 (GIKKEIQIPT…CHGQGRVETY (79 aa)) adopts a CR-type zinc-finger fold. Positions 145, 148, 162, 165, 184, 187, 198, and 201 each coordinate Zn(2+). CXXCXGXG motif repeat units lie at residues 145-152 (CKTCYGSG), 162-169 (CSTCHGKG), 184-191 (CPTCHGKG), and 198-205 (CNLCHGQG).

Belongs to the DnaJ family. As to quaternary structure, homodimer. Zn(2+) is required as a cofactor.

The protein localises to the cytoplasm. Participates actively in the response to hyperosmotic and heat shock by preventing the aggregation of stress-denatured proteins and by disaggregating proteins, also in an autonomous, DnaK-independent fashion. Unfolded proteins bind initially to DnaJ; upon interaction with the DnaJ-bound protein, DnaK hydrolyzes its bound ATP, resulting in the formation of a stable complex. GrpE releases ADP from DnaK; ATP binding to DnaK triggers the release of the substrate protein, thus completing the reaction cycle. Several rounds of ATP-dependent interactions between DnaJ, DnaK and GrpE are required for fully efficient folding. Also involved, together with DnaK and GrpE, in the DNA replication of plasmids through activation of initiation proteins. The chain is Chaperone protein DnaJ from Buchnera aphidicola subsp. Acyrthosiphon pisum (strain 5A).